Here is a 602-residue protein sequence, read N- to C-terminus: Chaperone protein DnaK (602 aa).

Residue T199 is modified to Phosphothreonine; by autocatalysis.

Belongs to the heat shock protein 70 family.

In terms of biological role, acts as a chaperone. The polypeptide is Chaperone protein DnaK (Carsonella ruddii (strain PV)).